The sequence spans 512 residues: 2,3-bisphosphoglycerate-independent phosphoglycerate mutase (512 aa).

Residues Asp11 and Ser61 each contribute to the Mn(2+) site. Ser61 functions as the Phosphoserine intermediate in the catalytic mechanism. Substrate-binding positions include His122, 152–153 (RD), Arg184, Arg190, 259–262 (RADR), and Lys332. Positions 399, 403, 440, 441, and 459 each coordinate Mn(2+).

It belongs to the BPG-independent phosphoglycerate mutase family. As to quaternary structure, monomer. It depends on Mn(2+) as a cofactor.

It carries out the reaction (2R)-2-phosphoglycerate = (2R)-3-phosphoglycerate. It functions in the pathway carbohydrate degradation; glycolysis; pyruvate from D-glyceraldehyde 3-phosphate: step 3/5. In terms of biological role, catalyzes the interconversion of 2-phosphoglycerate and 3-phosphoglycerate. This is 2,3-bisphosphoglycerate-independent phosphoglycerate mutase from Francisella tularensis subsp. holarctica (strain FTNF002-00 / FTA).